The primary structure comprises 199 residues: MKKIILATSNKNKIIEFKKILSELNINTISQKDLGICSIEENKSTFLENALIKARNASKYGFPALSDDSGLIIKTLNGEPGVYSSRFSGNQSNDIKNINMVLKKMLPFKKMDRQACMHCVLIYIRNPNDPIPIISSGTIYGKISNSISKINFGFGYDSIFFLPKKKKTISELTLEEKIKISHRGIAMKKMIKFLKNEKY.

8-13 (TSNKNK) is a substrate binding site. The Mg(2+) site is built by glutamate 40 and aspartate 68. The Proton acceptor role is filled by aspartate 68. Substrate-binding positions include serine 69, 154–157 (FGYD), lysine 177, and 182–183 (HR).

This sequence belongs to the HAM1 NTPase family. In terms of assembly, homodimer. The cofactor is Mg(2+).

The enzyme catalyses XTP + H2O = XMP + diphosphate + H(+). It carries out the reaction dITP + H2O = dIMP + diphosphate + H(+). The catalysed reaction is ITP + H2O = IMP + diphosphate + H(+). Functionally, pyrophosphatase that catalyzes the hydrolysis of nucleoside triphosphates to their monophosphate derivatives, with a high preference for the non-canonical purine nucleotides XTP (xanthosine triphosphate), dITP (deoxyinosine triphosphate) and ITP. Seems to function as a house-cleaning enzyme that removes non-canonical purine nucleotides from the nucleotide pool, thus preventing their incorporation into DNA/RNA and avoiding chromosomal lesions. In Wigglesworthia glossinidia brevipalpis, this protein is dITP/XTP pyrophosphatase.